A 296-amino-acid chain; its full sequence is MEINGTVIEDTFSEAFTGRCVRATITARDMETVRRAAYDSTATPGAVIGRVEGGVESFHSADETPDGRPGATVQFYYALPDLEKFQVELSYRIRQDILVKPFTALYNSTPDPEGYMDMMKHVGHCGDGYEWIEEFGGREMINIPIAVPDFKIESKMGYRDAIMGANFWYMCRDPETVLEAGRAAINAIGEVEGVVTPFDICSAASKPETNYPWIGPTTNHPYCPSLRDLLGDKSKVPEGVGYIPEIVINGLSLEALEEAMRAGIETVCRYDGVLMVSAGNYDGKLGDHRIDLHGVL.

The protein belongs to the FTR family.

In Methanothermobacter marburgensis (strain ATCC BAA-927 / DSM 2133 / JCM 14651 / NBRC 100331 / OCM 82 / Marburg) (Methanobacterium thermoautotrophicum), this protein is Formylmethanofuran--tetrahydromethanopterin formyltransferase-like protein (ehaS).